Here is an 810-residue protein sequence, read N- to C-terminus: DNA replication licensing factor mcm-6 (810 aa).

The MCM domain occupies 346–553; it reads IEKNIVDSLF…VTDYAIARRI (208 aa). ATP contacts are provided by S400, T401, A402, K403, S404, and N505. Residues 529 to 532 carry the Arginine finger motif; the sequence is SRFD. ADP-binding residues include R622 and E625. The tract at residues 685–705 is disordered; it reads KENQGGDDDMEHDGEKDETAK.

This sequence belongs to the MCM family. In terms of assembly, component of the mcm2-7 complex. The complex forms a toroidal hexameric ring with the proposed subunit order mcm2-mcm6-mcm4-mcm7-mcm3-mcm5 (By simililarity).

Its subcellular location is the nucleus. It carries out the reaction ATP + H2O = ADP + phosphate + H(+). Functionally, acts as a component of the MCM2-7 complex (MCM complex) which is the replicative helicase essential for 'once per cell cycle' DNA replication initiation and elongation in eukaryotic cells. Core component of CDC45-MCM-GINS (CMG) helicase, the molecular machine that unwinds template DNA during replication, and around which the replisome is built. The active ATPase sites in the MCM2-7 ring are formed through the interaction surfaces of two neighboring subunits such that a critical structure of a conserved arginine finger motif is provided in trans relative to the ATP-binding site of the Walker A box of the adjacent subunit. The six ATPase active sites, however, are likely to contribute differentially to the complex helicase activity. This Caenorhabditis briggsae protein is DNA replication licensing factor mcm-6.